Here is a 156-residue protein sequence, read N- to C-terminus: Snaclec 2 (156 aa).

A signal peptide spans 1–21 (MGRFIFLSSGLLVVFLSLSGA). 3 cysteine pairs are disulfide-bonded: cysteine 25–cysteine 36, cysteine 53–cysteine 150, and cysteine 125–cysteine 142. The C-type lectin domain maps to 32-151 (FDQHCYRAFD…CGDDYPFVCK (120 aa)).

The protein belongs to the snaclec family. In terms of assembly, heterodimer; disulfide-linked. In terms of tissue distribution, expressed by the venom gland.

Its subcellular location is the secreted. Its function is as follows. Interferes with one step of hemostasis (modulation of platelet aggregation, or coagulation cascade, for example). The polypeptide is Snaclec 2 (Bitis gabonica (Gaboon adder)).